Reading from the N-terminus, the 517-residue chain is Pentatricopeptide repeat-containing protein At5g42450, mitochondrial (517 aa).

A mitochondrion-targeting transit peptide spans 1-23; it reads MLHMILSQRVILLRKYHSSANAL. PPR repeat units lie at residues 57-91, 92-126, 127-157, 158-188, 189-223, 225-259, 261-291, 294-329, and 368-398; these read DVISATAVIGRFVKESRHVEASQAFKRLLCLGIRP, NEFTFGTVIGSSTTSRDVKLGKQLHCYALKMGLAS, NVFVGSAVLNCYVKLSTLTDARRCFDDTRDP, NVVSITNLISGYLKKHEFEEALSLFRAMPER, SVVTWNAVIGGFSQTGRNEEAVNTFVDMLREGVVI, NESTFPCAITAISNIASHGAGKSIHACAIKFLGKR, NVFVWNSLISFYSKCGNMEDSLLAFNKLEEE, NIVSWNSMIWGYAHNGRGEEAVAMFEKMVKDTNLRP, and ELEHYACMVDMLSRSGRFKEAEELIKSMPLD. The type E motif stretch occupies residues 403–478; it reads FWKALLGGCQ…FTGCSWIEVR (76 aa). Residues 479 to 509 are type E(+) motif; it reads DQIRVFVNADKNNELKDEVYRMLALVSQHLE.

This sequence belongs to the PPR family. PCMP-E subfamily.

The protein localises to the mitochondrion. The polypeptide is Pentatricopeptide repeat-containing protein At5g42450, mitochondrial (PCMP-E102) (Arabidopsis thaliana (Mouse-ear cress)).